We begin with the raw amino-acid sequence, 303 residues long: Mycothiol acetyltransferase (303 aa).

N-acetyltransferase domains lie at 4–141 and 154–303; these read ITVR…RSLA and IVLR…ANGA. A 1D-myo-inositol 2-(L-cysteinylamino)-2-deoxy-alpha-D-glucopyranoside-binding site is contributed by E38. 80 to 82 is an acetyl-CoA binding site; sequence AAV. 1D-myo-inositol 2-(L-cysteinylamino)-2-deoxy-alpha-D-glucopyranoside contacts are provided by E181, K223, and E234. Residues 238 to 240 and 245 to 251 contribute to the acetyl-CoA site; these read VGI and QGRGLGR. Y272 contacts 1D-myo-inositol 2-(L-cysteinylamino)-2-deoxy-alpha-D-glucopyranoside. Residue 277 to 282 participates in acetyl-CoA binding; sequence NTAAVN.

It belongs to the acetyltransferase family. MshD subfamily. Monomer.

It carries out the reaction 1D-myo-inositol 2-(L-cysteinylamino)-2-deoxy-alpha-D-glucopyranoside + acetyl-CoA = mycothiol + CoA + H(+). Its function is as follows. Catalyzes the transfer of acetyl from acetyl-CoA to desacetylmycothiol (Cys-GlcN-Ins) to form mycothiol. This chain is Mycothiol acetyltransferase, found in Nocardia farcinica (strain IFM 10152).